The sequence spans 94 residues: Large ribosomal subunit protein bL25 (94 aa).

The protein belongs to the bacterial ribosomal protein bL25 family. As to quaternary structure, part of the 50S ribosomal subunit; part of the 5S rRNA/L5/L18/L25 subcomplex. Contacts the 5S rRNA. Binds to the 5S rRNA independently of L5 and L18.

Its function is as follows. This is one of the proteins that binds to the 5S RNA in the ribosome where it forms part of the central protuberance. The protein is Large ribosomal subunit protein bL25 of Escherichia coli O157:H7.